The chain runs to 335 residues: Gibberellin 2-beta-dioxygenase 3 (335 aa).

Positions Glu175–Pro278 constitute a Fe2OG dioxygenase domain. Fe cation-binding residues include His202, Asp204, and His259. Arg269 is an active-site residue.

The protein belongs to the iron/ascorbate-dependent oxidoreductase family. GA2OX subfamily. It depends on Fe(2+) as a cofactor. As to expression, not expressed in the apex.

The enzyme catalyses gibberellin A1 + 2-oxoglutarate + O2 = gibberellin A8 + succinate + CO2. It participates in plant hormone biosynthesis; gibberellin biosynthesis. In terms of biological role, catalyzes the 2-beta-hydroxylation of several biologically active gibberellins, leading to the homeostatic regulation of their endogenous level. Catabolism of gibberellins (GAs) plays a central role in plant development. Converts GA9/GA20 to GA51/GA29 and GA4/GA1 to GA34/GA8. This chain is Gibberellin 2-beta-dioxygenase 3 (GA2OX3), found in Arabidopsis thaliana (Mouse-ear cress).